A 182-amino-acid polypeptide reads, in one-letter code: Small ribosomal subunit protein uS4c (182 aa).

The S4 RNA-binding domain occupies 82–143; it reads MRLDNILFRL…KQRSKALIQN (62 aa).

The protein belongs to the universal ribosomal protein uS4 family. In terms of assembly, part of the 30S ribosomal subunit. Contacts protein S5. The interaction surface between S4 and S5 is involved in control of translational fidelity.

It localises to the plastid. It is found in the chloroplast. Functionally, one of the primary rRNA binding proteins, it binds directly to 16S rRNA where it nucleates assembly of the body of the 30S subunit. In terms of biological role, with S5 and S12 plays an important role in translational accuracy. This Iris domestica (Leopard lily) protein is Small ribosomal subunit protein uS4c (rps4).